The following is a 155-amino-acid chain: Protein SprT-like (155 aa).

A SprT-like domain is found at 6 to 148 (LQRLVERVSL…VCGQCGGKLM (143 aa)). Residue histidine 67 coordinates Zn(2+). Glutamate 68 is a catalytic residue. Histidine 71 is a binding site for Zn(2+).

Belongs to the SprT family. Zn(2+) serves as cofactor.

Its subcellular location is the cytoplasm. The chain is Protein SprT-like from Geobacillus sp. (strain WCH70).